The following is a 345-amino-acid chain: Glycerol-3-phosphate dehydrogenase [NAD(P)+] (345 aa).

NADPH is bound by residues S11, W12, H32, R33, and K106. The sn-glycerol 3-phosphate site is built by K106, G137, and S139. A141 lines the NADPH pocket. Sn-glycerol 3-phosphate-binding residues include K192, D245, S255, R256, and N257. Catalysis depends on K192, which acts as the Proton acceptor. NADPH is bound at residue R256. NADPH-binding residues include V280 and E282.

Belongs to the NAD-dependent glycerol-3-phosphate dehydrogenase family.

The protein localises to the cytoplasm. The enzyme catalyses sn-glycerol 3-phosphate + NAD(+) = dihydroxyacetone phosphate + NADH + H(+). It catalyses the reaction sn-glycerol 3-phosphate + NADP(+) = dihydroxyacetone phosphate + NADPH + H(+). The protein operates within membrane lipid metabolism; glycerophospholipid metabolism. With respect to regulation, does not seem to be inhibited by sn-glycerol 3-phosphate, in contrast to the E.coli homolog enzyme which is very sensitive to allosteric inhibition by G3P. Catalyzes the reduction of the glycolytic intermediate dihydroxyacetone phosphate (DHAP) to sn-glycerol 3-phosphate (G3P), the key precursor for phospholipid synthesis. The protein is Glycerol-3-phosphate dehydrogenase [NAD(P)+] of Bacillus subtilis (strain 168).